The primary structure comprises 388 residues: P2X purinoceptor 4 (388 aa).

Residues 1-33 (MTGCCTVLGAFLFEYDTPRIVLIRSRKVGLMNR) are Cytoplasmic-facing. A helical transmembrane segment spans residues 34 to 54 (TVQLLILAYVIGWVFVWEKGY). Over 55–338 (QETDSVVSSV…KFDIIPTMIN (284 aa)) the chain is Extracellular. ATP-binding residues include lysine 67 and lysine 69. The CTP site is built by lysine 67 and lysine 69. N-linked (GlcNAc...) asparagine glycosylation is found at asparagine 75, asparagine 110, asparagine 131, asparagine 153, and asparagine 184. 3 disulfides stabilise this stretch: cysteine 116–cysteine 165, cysteine 126–cysteine 149, and cysteine 132–cysteine 159. Positions 186 and 188 each coordinate ATP. Threonine 186 is a binding site for CTP. N-linked (GlcNAc...) asparagine glycans are attached at residues asparagine 199 and asparagine 208. 2 disulfides stabilise this stretch: cysteine 217–cysteine 227 and cysteine 261–cysteine 270. ATP contacts are provided by asparagine 293, arginine 295, and lysine 313. CTP is bound by residues asparagine 293, arginine 295, and lysine 313. The helical transmembrane segment at 339 to 359 (IGSGLALLGVATVLCDVIVLY) threads the bilayer. At 360 to 388 (CMKKRYYYREKKYKYVEDYEQGLGNQMEQ) the chain is on the cytoplasmic side.

The protein belongs to the P2X receptor family. Functional P2RXs are organized as homomeric and heteromeric trimers. Forms heterotrimer with P2RX1. Interacts with P2RX7 (via C-terminus); this interaction is functional only in the presence of ATP. Forms heterotrimer with P2RX4; functional differences between homomeric P2RX4 and P2RX4/6 heterotrimer are minor. Interacts with AP1M2.

The protein localises to the cell membrane. It is found in the lysosome membrane. The enzyme catalyses K(+)(in) = K(+)(out). It carries out the reaction Na(+)(in) = Na(+)(out). It catalyses the reaction Ca(2+)(in) = Ca(2+)(out). Its activity is regulated as follows. Activated by ATP. pH-dependent and inhibited by acidic pH. ATP-gated nonselective transmembrane cation channel permeable to potassium, sodium and calcium. CTP, but not GTP or UTP, functions as a weak affinity agonist for P2RX4. Activated by extracellularly released ATP, it plays multiple role in immunity and central nervous system physiology. Could also function as an ATP-gated cation channel of lysosomal membranes. The protein is P2X purinoceptor 4 (P2RX4) of Bos taurus (Bovine).